The following is a 620-amino-acid chain: DNA mismatch repair protein MutL (620 aa).

The protein belongs to the DNA mismatch repair MutL/HexB family.

Its function is as follows. This protein is involved in the repair of mismatches in DNA. It is required for dam-dependent methyl-directed DNA mismatch repair. May act as a 'molecular matchmaker', a protein that promotes the formation of a stable complex between two or more DNA-binding proteins in an ATP-dependent manner without itself being part of a final effector complex. The polypeptide is DNA mismatch repair protein MutL (Clostridium tetani (strain Massachusetts / E88)).